Here is a 200-residue protein sequence, read N- to C-terminus: Large ribosomal subunit protein uL4 (200 aa).

Positions 38–73 (GRQGTKGQKSRSDVSGGGKRPWRQKGTGRARAGTTR) are disordered.

This sequence belongs to the universal ribosomal protein uL4 family. Part of the 50S ribosomal subunit.

In terms of biological role, one of the primary rRNA binding proteins, this protein initially binds near the 5'-end of the 23S rRNA. It is important during the early stages of 50S assembly. It makes multiple contacts with different domains of the 23S rRNA in the assembled 50S subunit and ribosome. Functionally, forms part of the polypeptide exit tunnel. The sequence is that of Large ribosomal subunit protein uL4 from Ectopseudomonas mendocina (strain ymp) (Pseudomonas mendocina).